A 228-amino-acid chain; its full sequence is Ribulose-phosphate 3-epimerase (228 aa).

Ser11 is a substrate binding site. His36, Asp38, and His69 together coordinate a divalent metal cation. Catalysis depends on Asp38, which acts as the Proton acceptor. Residues His69, 145–148 (GFCG), 180–182 (DGG), and 202–203 (AS) contribute to the substrate site. Asp180 is an a divalent metal cation binding site. The active-site Proton donor is the Asp180.

The protein belongs to the ribulose-phosphate 3-epimerase family. A divalent metal cation serves as cofactor.

The enzyme catalyses D-ribulose 5-phosphate = D-xylulose 5-phosphate. It functions in the pathway carbohydrate degradation. Functionally, catalyzes the reversible epimerization of D-ribulose 5-phosphate to D-xylulose 5-phosphate. The polypeptide is Ribulose-phosphate 3-epimerase (Chlamydia muridarum (strain MoPn / Nigg)).